The primary structure comprises 643 residues: Long-chain fatty acid transport protein 4 (643 aa).

2 helical membrane-spanning segments follow: residues 20 to 42 and 139 to 156; these read LPWT…WRFI and FVGL…AALI. 243–254 lines the AMP pocket; the sequence is YIYTSGTTGLPK.

It belongs to the ATP-dependent AMP-binding enzyme family.

It localises to the endoplasmic reticulum membrane. The enzyme catalyses a fatty acid(in) = a fatty acid(out). The catalysed reaction is (9Z,12Z)-octadecadienoate(out) = (9Z,12Z)-octadecadienoate(in). It catalyses the reaction (9Z)-octadecenoate(out) = (9Z)-octadecenoate(in). It carries out the reaction hexadecanoate(out) = hexadecanoate(in). The enzyme catalyses a long-chain fatty acid + ATP + CoA = a long-chain fatty acyl-CoA + AMP + diphosphate. The catalysed reaction is (5Z,8Z,11Z,14Z)-eicosatetraenoate + ATP + CoA = (5Z,8Z,11Z,14Z)-eicosatetraenoyl-CoA + AMP + diphosphate. It catalyses the reaction (9Z)-octadecenoate + ATP + CoA = (9Z)-octadecenoyl-CoA + AMP + diphosphate. It carries out the reaction hexadecanoate + ATP + CoA = hexadecanoyl-CoA + AMP + diphosphate. The enzyme catalyses (E)-hexadec-2-enoate + ATP + CoA = (2E)-hexadecenoyl-CoA + AMP + diphosphate. The catalysed reaction is a very long-chain fatty acid + ATP + CoA = a very long-chain fatty acyl-CoA + AMP + diphosphate. It catalyses the reaction tetracosanoate + ATP + CoA = tetracosanoyl-CoA + AMP + diphosphate. Its function is as follows. Mediates the import of long-chain fatty acids (LCFA) into the cell by facilitating their transport across cell membranes. Appears to be the principal fatty acid transporter in small intestinal enterocytes. Also functions as an acyl-CoA ligase catalyzing the ATP-dependent formation of fatty acyl-CoA using LCFA and very-long-chain fatty acids (VLCFA) as substrates, which prevents fatty acid efflux from cells and might drive more fatty acid uptake. Plays a role in the formation of the epidermal barrier. Required for fat absorption in early embryogenesis. Probably involved in fatty acid transport across the blood barrier. Indirectly inhibits RPE65 via substrate competition and via production of VLCFA derivatives like lignoceroyl-CoA. Prevents light-induced degeneration of rods and cones. This is Long-chain fatty acid transport protein 4 (SLC27A4) from Pongo abelii (Sumatran orangutan).